Consider the following 558-residue polypeptide: Transcription termination factor MTEF18, mitochondrial (558 aa).

The N-terminal 58 residues, Met1–Gln58, are a transit peptide targeting the mitochondrion.

It belongs to the mTERF family.

It is found in the mitochondrion. Transcription termination factor involved in the regulation of mitochondrial-encoded gene expression. Essential for normal plant growth and development. This chain is Transcription termination factor MTEF18, mitochondrial, found in Arabidopsis thaliana (Mouse-ear cress).